A 259-amino-acid polypeptide reads, in one-letter code: Isoepoxydon dehydrogenase patN (259 aa).

The NADP(+) site is built by aspartate 69, asparagine 96, and lysine 125. Residues serine 143 and serine 144 each act as proton donor in the active site. Positions 158, 162, and 191 each coordinate NADP(+). The Proton acceptor role is filled by tyrosine 158. The Lowers pKa of active site Tyr role is filled by lysine 162.

It belongs to the short-chain dehydrogenases/reductases (SDR) family.

Its subcellular location is the cytoplasm. It localises to the cytosol. It carries out the reaction isoepoxydon + NADP(+) = phyllostine + NADPH + H(+). The protein operates within mycotoxin biosynthesis; patulin biosynthesis. Functionally, isoepoxydon dehydrogenase; part of the gene cluster that mediates the biosynthesis of patulin, an acetate-derived tetraketide mycotoxin produced by several fungal species that shows antimicrobial properties against several bacteria. PatN catalyzes the conversion of isoepoxydon into phyllostine. The pathway begins with the synthesis of 6-methylsalicylic acid by the polyketide synthase (PKS) patK via condensation of acetate and malonate units. The 6-methylsalicylic acid decarboxylase patG then catalyzes the decarboxylation of 6-methylsalicylic acid to yield m-cresol (also known as 3-methylphenol). These first reactions occur in the cytosol. The intermediate m-cresol is then transported into the endoplasmic reticulum where the cytochrome P450 monooxygenase patH converts it to m-hydroxybenzyl alcohol, which is further converted to gentisyl alcohol by the cytochrome P450 monooxygenase patI. The oxidoreductases patJ and patO further convert gentisyl alcohol to isoepoxydon in the vacuole. PatN catalyzes then the transformation of isoepoxydon into phyllostine. The cluster protein patF is responsible for the conversion from phyllostine to neopatulin whereas the alcohol dehydrogenase patD converts neopatulin to E-ascladiol. The steps between isoepoxydon and E-ascladiol occur in the cytosol, and E-ascladiol is probably secreted to the extracellular space by one of the cluster-specific transporters patC or patM. Finally, the secreted patulin synthase patE catalyzes the conversion of E-ascladiol to patulin. This is Isoepoxydon dehydrogenase patN from Penicillium expansum (Blue mold rot fungus).